Here is a 167-residue protein sequence, read N- to C-terminus: 6,7-dimethyl-8-ribityllumazine synthase (167 aa).

5-amino-6-(D-ribitylamino)uracil-binding positions include phenylalanine 26, 60-62, and 89-91; these read AFE and AII. A (2S)-2-hydroxy-3-oxobutyl phosphate-binding site is contributed by 94 to 95; sequence ET. Histidine 97 acts as the Proton donor in catalysis. A 5-amino-6-(D-ribitylamino)uracil-binding site is contributed by phenylalanine 122. (2S)-2-hydroxy-3-oxobutyl phosphate is bound at residue arginine 136.

Belongs to the DMRL synthase family. In terms of assembly, forms an icosahedral capsid composed of 60 subunits, arranged as a dodecamer of pentamers.

The enzyme catalyses (2S)-2-hydroxy-3-oxobutyl phosphate + 5-amino-6-(D-ribitylamino)uracil = 6,7-dimethyl-8-(1-D-ribityl)lumazine + phosphate + 2 H2O + H(+). The protein operates within cofactor biosynthesis; riboflavin biosynthesis; riboflavin from 2-hydroxy-3-oxobutyl phosphate and 5-amino-6-(D-ribitylamino)uracil: step 1/2. Functionally, catalyzes the formation of 6,7-dimethyl-8-ribityllumazine by condensation of 5-amino-6-(D-ribitylamino)uracil with 3,4-dihydroxy-2-butanone 4-phosphate. This is the penultimate step in the biosynthesis of riboflavin. The polypeptide is 6,7-dimethyl-8-ribityllumazine synthase (Ruthia magnifica subsp. Calyptogena magnifica).